The following is a 431-amino-acid chain: ORC1-type DNA replication protein 14 (431 aa).

ATP contacts are provided by residues Thr62 to Leu66, Tyr219, and Arg231.

Belongs to the CDC6/cdc18 family.

Functionally, involved in regulation of DNA replication. The protein is ORC1-type DNA replication protein 14 (cdc6n) of Haloarcula marismortui (strain ATCC 43049 / DSM 3752 / JCM 8966 / VKM B-1809) (Halobacterium marismortui).